We begin with the raw amino-acid sequence, 318 residues long: Transaldolase (318 aa).

The active-site Schiff-base intermediate with substrate is Lys-132.

This sequence belongs to the transaldolase family. Type 1 subfamily. Homodimer.

Its subcellular location is the cytoplasm. The catalysed reaction is D-sedoheptulose 7-phosphate + D-glyceraldehyde 3-phosphate = D-erythrose 4-phosphate + beta-D-fructose 6-phosphate. The protein operates within carbohydrate degradation; pentose phosphate pathway; D-glyceraldehyde 3-phosphate and beta-D-fructose 6-phosphate from D-ribose 5-phosphate and D-xylulose 5-phosphate (non-oxidative stage): step 2/3. Functionally, transaldolase is important for the balance of metabolites in the pentose-phosphate pathway. The protein is Transaldolase of Allorhizobium ampelinum (strain ATCC BAA-846 / DSM 112012 / S4) (Agrobacterium vitis (strain S4)).